A 199-amino-acid polypeptide reads, in one-letter code: MTGFKQHKGIVVPLDSANVDTDAIIPKQFLQKVNRIGFGKHLFHDWRFLDDAGQQPNPEFVLNQPQFAGASILLARENFGCGSSREHAPWALADYGFKTIIAPSFADIFYGNAINNGMVPVRLKEEEVDALFQLVAAQPGIEIEVDLEANQVRADSLCFGFEIDEFRRYCLLNGLDAIGLTLQHEAAISAFEAKQPSWI.

Belongs to the LeuD family. LeuD type 1 subfamily. Heterodimer of LeuC and LeuD.

The catalysed reaction is (2R,3S)-3-isopropylmalate = (2S)-2-isopropylmalate. It participates in amino-acid biosynthesis; L-leucine biosynthesis; L-leucine from 3-methyl-2-oxobutanoate: step 2/4. In terms of biological role, catalyzes the isomerization between 2-isopropylmalate and 3-isopropylmalate, via the formation of 2-isopropylmaleate. In Aeromonas hydrophila subsp. hydrophila (strain ATCC 7966 / DSM 30187 / BCRC 13018 / CCUG 14551 / JCM 1027 / KCTC 2358 / NCIMB 9240 / NCTC 8049), this protein is 3-isopropylmalate dehydratase small subunit.